We begin with the raw amino-acid sequence, 138 residues long: 16 kDa phloem protein 2 (138 aa).

Residues 1 to 108 (MGMGMMEVHL…LAEGVRKGWS (108 aa)) form the C2 domain. Ca(2+) contacts are provided by Asp20, Asp27, Asp78, Asp80, and Asp86.

Ca(2+) is required as a cofactor. In terms of tissue distribution, sieve elements of leaves, stems, roots and flowers.

Binds to both sense and antisense RNA. Interacts with mesophyll plasmodesmata to mediate its own cell-to-cell transport and potentiate RNA trafficking. The protein is 16 kDa phloem protein 2 (PP16-2) of Cucurbita maxima (Pumpkin).